The primary structure comprises 929 residues: Bifunctional glutamine synthetase adenylyltransferase/adenylyl-removing enzyme (929 aa).

Residues 1–422 (MTTPISTSRA…TRHFEQIFAV (422 aa)) form an adenylyl removase region. Positions 429–929 (LGTFARIRPE…FQLWEDVFGT (501 aa)) are adenylyl transferase.

Belongs to the GlnE family. The cofactor is Mg(2+).

The catalysed reaction is [glutamine synthetase]-O(4)-(5'-adenylyl)-L-tyrosine + phosphate = [glutamine synthetase]-L-tyrosine + ADP. It carries out the reaction [glutamine synthetase]-L-tyrosine + ATP = [glutamine synthetase]-O(4)-(5'-adenylyl)-L-tyrosine + diphosphate. Involved in the regulation of glutamine synthetase GlnA, a key enzyme in the process to assimilate ammonia. When cellular nitrogen levels are high, the C-terminal adenylyl transferase (AT) inactivates GlnA by covalent transfer of an adenylyl group from ATP to specific tyrosine residue of GlnA, thus reducing its activity. Conversely, when nitrogen levels are low, the N-terminal adenylyl removase (AR) activates GlnA by removing the adenylyl group by phosphorolysis, increasing its activity. The regulatory region of GlnE binds the signal transduction protein PII (GlnB) which indicates the nitrogen status of the cell. The polypeptide is Bifunctional glutamine synthetase adenylyltransferase/adenylyl-removing enzyme (Nitrosomonas eutropha (strain DSM 101675 / C91 / Nm57)).